We begin with the raw amino-acid sequence, 506 residues long: Tyrosine-protein phosphatase non-receptor type substrate 1 (506 aa).

Positions 1 to 29 (MEPARPAPGRLRPLLCLLLAASNAWTGTA) are cleaved as a signal peptide. The Ig-like V-type domain occupies 30-145 (GDGELQVIQP…SGPGTHLTVS (116 aa)). Residues 30 to 371 (GDGELQVIQP…PGPNDSNWTS (342 aa)) are Extracellular-facing. Cys55 and Cys121 are disulfide-bonded. The N-linked (GlcNAc...) asparagine glycan is linked to Asn92. Residues 136–159 (SGPGTHLTVSAKPSPPVLSGPTVR) form a disordered region. Ig-like C1-type domains are found at residues 148-248 (PSPP…ANLS) and 255-348 (PTLE…HTLE). Asn167, Asn179, Asn204, Asn210, Asn246, Asn270, Asn292, Asn311, Asn319, Asn344, Asn365, and Asn368 each carry an N-linked (GlcNAc...) asparagine glycan. A disulfide bridge links Cys170 with Cys228. Cys273 and Cys331 form a disulfide bridge. A disordered region spans residues 344–364 (NHTLEVSAPQKDQDTGQTPGP). Residues 372–392 (IFIVVGVVCALLVALLIAALY) traverse the membrane as a helical segment. At 393–506 (LLRIRQNKAK…EYASVQVQRK (114 aa)) the chain is on the cytoplasmic side. The segment at 402–468 (KGSTSSTRLH…QARPPPVSED (67 aa)) is disordered. Basic and acidic residues predominate over residues 409–418 (RLHEPEKNTR). Residues 419–429 (ETTQIQDNNDI) are compositionally biased toward polar residues. Tyr431 carries the phosphotyrosine; by Tyr-kinases modification. The SH2-binding signature appears at 432-435 (ADLN). An SH3-binding motif is present at residues 441–446 (KSTPKA). Residues 444 to 456 (PKANEPNNHTEYA) are compositionally biased toward polar residues. Tyr455, Tyr472, and Tyr498 each carry phosphotyrosine; by Tyr-kinases. 3 short sequence motifs (SH2-binding) span residues 455 to 458 (YASI), 472 to 475 (YADL), and 498 to 501 (YASV). A disordered region spans residues 480–506 (LNRTPKQPAPKPEPSYSEYASVQVQRK). Residues 497 to 506 (EYASVQVQRK) show a composition bias toward polar residues.

Binds PTPN11 when tyrosine-phosphorylated, except in macrophages, where it primarily binds PTPN6. Binds GRB2 in vitro. Binds JAK2 irrespective of its phosphorylation status and forms a stable complex. Binds SCAP1 and/or SCAP2. The resulting complex recruits FYB1. Binds FGR and PTK2B. Interacts with TRIM2. In terms of processing, phosphorylated on tyrosine residues. In terms of tissue distribution, highly expressed in spleen macrophages. Detected in skin dendritic cells.

It localises to the membrane. In terms of biological role, immunoglobulin-like cell surface receptor for CD47. Acts as docking protein and induces translocation of PTPN6, PTPN11 and other binding partners from the cytosol to the plasma membrane. Supports adhesion of cerebellar neurons, neurite outgrowth and glial cell attachment. May play a key role in intracellular signaling during synaptogenesis and in synaptic function. Involved in the negative regulation of receptor tyrosine kinase-coupled cellular responses induced by cell adhesion, growth factors or insulin. Mediates negative regulation of phagocytosis, mast cell activation and dendritic cell activation. CD47 binding prevents maturation of immature dendritic cells and inhibits cytokine production by mature dendritic cells. Plays a role in antiviral immunity and limits new world arenavirus infection by decreasing virus internalization. Receptor for THBS1. Interaction with THBS1 stimulates phosphorylation of SIRPA. In response to THBS1, involved in ROS signaling in non-phagocytic cells, stimulating NADPH oxidase-derived ROS production. The protein is Tyrosine-protein phosphatase non-receptor type substrate 1 (SIRPA) of Bos taurus (Bovine).